The chain runs to 155 residues: Small ribosomal subunit protein uS7 (155 aa).

It belongs to the universal ribosomal protein uS7 family. Part of the 30S ribosomal subunit. Contacts proteins S9 and S11.

In terms of biological role, one of the primary rRNA binding proteins, it binds directly to 16S rRNA where it nucleates assembly of the head domain of the 30S subunit. Is located at the subunit interface close to the decoding center, probably blocks exit of the E-site tRNA. This is Small ribosomal subunit protein uS7 from Chlorobium phaeobacteroides (strain BS1).